A 204-amino-acid polypeptide reads, in one-letter code: uncharacterized protein (204 aa).

A signal peptide spans 1–17 (MKRLVTGLLALSLFLAA). The segment at 17 to 100 (ACGQDSDQQK…NNNQANNNQK (84 aa)) is disordered. The N-palmitoyl cysteine moiety is linked to residue Cys-18. A lipid anchor (S-diacylglycerol cysteine) is attached at Cys-18. The segment covering 23–70 (DQQKDGNKEKDDKAKTEQQDKKTNDSSKDKKDNKDDSKDVNKDNKDNS) has biased composition (basic and acidic residues). A compositionally biased stretch (low complexity) spans 71–100 (ANDNQQQSNSNATNNDQNQTNNNQANNNQK).

The protein localises to the cell membrane. This is an uncharacterized protein from Staphylococcus aureus (strain MSSA476).